The primary structure comprises 396 residues: (S)-8-oxocitronellyl enol synthase ISY2 (396 aa).

NADP(+)-binding positions include 38 to 40 (TGL), 66 to 67 (RR), 84 to 85 (DV), 108 to 109 (TW), glutamine 146, tyrosine 182, isoleucine 209, and 216 to 218 (SMM). Tyrosine 182 is an active-site residue.

The protein belongs to the short-chain dehydrogenases/reductases (SDR) family.

The catalysed reaction is (S)-8-oxocitronellyl enol + NADP(+) = (6E)-8-oxogeranial + NADPH + H(+). It carries out the reaction (S)-8-oxocitronellyl enol + NAD(+) = (6E)-8-oxogeranial + NADH + H(+). Iridoid synthase that catalyzes the first step in generation of the iridoid ring scaffold using the linear monoterpene (6E)-8-oxogeranial as substrate. Iridoids comprise a large family of distinctive bicyclic monoterpenes that possess a wide range of pharmacological activities, including anticancer, anti-inflammatory, antifungal and antibacterial activities. Catalyzes the conversion of the linear monoterpene (6E)-8-oxogeranial to (S)-8-oxocitronellyl enol, a precursor of nepetalactones, which are metabolites that are both insect-repellent and have euphoric effect in cats. This is (S)-8-oxocitronellyl enol synthase ISY2 from Nepeta racemosa (Catmint).